We begin with the raw amino-acid sequence, 172 residues long: Pollen-specific protein-like At4g18596 (172 aa).

The signal sequence occupies residues 1–27; sequence MASKAIFFFFVSAVCLSSLAGVAIADA. 3 disulfide bridges follow: Cys41/Cys112, Cys44/Cys157, and Cys65/Cys100. A glycan (N-linked (GlcNAc...) asparagine) is linked at Asn70.

This sequence belongs to the Ole e I family.

Its subcellular location is the secreted. The polypeptide is Pollen-specific protein-like At4g18596 (Arabidopsis thaliana (Mouse-ear cress)).